The following is a 130-amino-acid chain: Large ribosomal subunit protein bL12 (130 aa).

It belongs to the bacterial ribosomal protein bL12 family. Homodimer. Part of the ribosomal stalk of the 50S ribosomal subunit. Forms a multimeric L10(L12)X complex, where L10 forms an elongated spine to which 2 to 4 L12 dimers bind in a sequential fashion. Binds GTP-bound translation factors.

Functionally, forms part of the ribosomal stalk which helps the ribosome interact with GTP-bound translation factors. Is thus essential for accurate translation. This chain is Large ribosomal subunit protein bL12, found in Nostoc sp. (strain PCC 7120 / SAG 25.82 / UTEX 2576).